Reading from the N-terminus, the 248-residue chain is Octanoyltransferase (248 aa).

Residues 53 to 234 (ADTVDEIWIV…RLIANLDGES (182 aa)) form the BPL/LPL catalytic domain. Substrate contacts are provided by residues 93 to 100 (RGGQITYH), 165 to 167 (ALG), and 178 to 180 (GLS). The active-site Acyl-thioester intermediate is the cysteine 196.

It belongs to the LipB family.

Its subcellular location is the cytoplasm. The enzyme catalyses octanoyl-[ACP] + L-lysyl-[protein] = N(6)-octanoyl-L-lysyl-[protein] + holo-[ACP] + H(+). The protein operates within protein modification; protein lipoylation via endogenous pathway; protein N(6)-(lipoyl)lysine from octanoyl-[acyl-carrier-protein]: step 1/2. In terms of biological role, catalyzes the transfer of endogenously produced octanoic acid from octanoyl-acyl-carrier-protein onto the lipoyl domains of lipoate-dependent enzymes. Lipoyl-ACP can also act as a substrate although octanoyl-ACP is likely to be the physiological substrate. The polypeptide is Octanoyltransferase (Burkholderia multivorans (strain ATCC 17616 / 249)).